The chain runs to 129 residues: Small ribosomal subunit protein uS11 (129 aa).

Belongs to the universal ribosomal protein uS11 family. As to quaternary structure, part of the 30S ribosomal subunit. Interacts with proteins S7 and S18. Binds to IF-3.

Its function is as follows. Located on the platform of the 30S subunit, it bridges several disparate RNA helices of the 16S rRNA. Forms part of the Shine-Dalgarno cleft in the 70S ribosome. This chain is Small ribosomal subunit protein uS11, found in Salmonella newport (strain SL254).